Consider the following 204-residue polypeptide: Tetraspanin-13 (204 aa).

Topologically, residues 1–19 (MVCGGFSCSKNCLCALNLL) are cytoplasmic. Residues 20-40 (YTLVSLLLIGIAAWGIGFGLI) form a helical membrane-spanning segment. At 41–44 (SSLR) the chain is on the extracellular side. Residues 45 to 65 (VVGVVIAVGIFLFLIALVGLI) traverse the membrane as a helical segment. Topologically, residues 66–72 (GAVKHHQ) are cytoplasmic. The helical transmembrane segment at 73–93 (VLLFFYMIILLLVFIVQFSVS) threads the bilayer. At 94 to 167 (CACLALNREQ…IGEYAGEVLR (74 aa)) the chain is on the extracellular side. 2 N-linked (GlcNAc...) asparagine glycosylation sites follow: Asn-113 and Asn-137. Ser-143 carries the phosphoserine modification. A helical membrane pass occupies residues 168–188 (FVGGIGLFFSFTEILGVWLTY). The Cytoplasmic portion of the chain corresponds to 189–204 (RYRNQKDPRANPSAFL).

Belongs to the tetraspanin (TM4SF) family.

Its subcellular location is the membrane. The chain is Tetraspanin-13 (Tspan13) from Rattus norvegicus (Rat).